We begin with the raw amino-acid sequence, 189 residues long: MNDIKPAIMMVLVFTIICGGIYPAVVTGIAQAVFPKEATGSFITDRSGREIGSALIGQPFSDSKYFWPRPSATTDFGYNPAASGGSNSGPTNPDYLKTVANRVKALKDTGVSTGIPTDLVQASASGLDPHISPEAASVQIPRVAKARGMMEDKVRRLVSGHTEDRQFGIIGSPRVNVLALNLALDRLAP.

Residues 6 to 26 traverse the membrane as a helical segment; it reads PAIMMVLVFTIICGGIYPAVV.

It belongs to the KdpC family. The system is composed of three essential subunits: KdpA, KdpB and KdpC.

Its subcellular location is the cell inner membrane. Its function is as follows. Part of the high-affinity ATP-driven potassium transport (or Kdp) system, which catalyzes the hydrolysis of ATP coupled with the electrogenic transport of potassium into the cytoplasm. This subunit acts as a catalytic chaperone that increases the ATP-binding affinity of the ATP-hydrolyzing subunit KdpB by the formation of a transient KdpB/KdpC/ATP ternary complex. This chain is Potassium-transporting ATPase KdpC subunit, found in Geobacter metallireducens (strain ATCC 53774 / DSM 7210 / GS-15).